Reading from the N-terminus, the 234-residue chain is Isoprenyl transferase (234 aa).

Residue Asp-13 is part of the active site. Asp-13 is a binding site for Mg(2+). Substrate is bound by residues 14–17 (GNGR), Trp-18, Arg-26, His-30, and 58–60 (STE). Asn-61 functions as the Proton acceptor in the catalytic mechanism. Substrate-binding positions include Trp-62, Arg-64, Arg-180, and 186-188 (RLS). Glu-199 contributes to the Mg(2+) binding site.

This sequence belongs to the UPP synthase family. As to quaternary structure, homodimer. Mg(2+) is required as a cofactor.

Functionally, catalyzes the condensation of isopentenyl diphosphate (IPP) with allylic pyrophosphates generating different type of terpenoids. The sequence is that of Isoprenyl transferase from Helicobacter pylori (strain J99 / ATCC 700824) (Campylobacter pylori J99).